The primary structure comprises 184 residues: Shikimate kinase (184 aa).

17–22 (GAGKTT) serves as a coordination point for ATP. Residue T21 participates in Mg(2+) binding. Residues D39, R63, and G85 each contribute to the substrate site. R123 is an ATP binding site. Residue R142 participates in substrate binding.

Belongs to the shikimate kinase family. In terms of assembly, monomer. Mg(2+) serves as cofactor.

Its subcellular location is the cytoplasm. The catalysed reaction is shikimate + ATP = 3-phosphoshikimate + ADP + H(+). It functions in the pathway metabolic intermediate biosynthesis; chorismate biosynthesis; chorismate from D-erythrose 4-phosphate and phosphoenolpyruvate: step 5/7. Functionally, catalyzes the specific phosphorylation of the 3-hydroxyl group of shikimic acid using ATP as a cosubstrate. The polypeptide is Shikimate kinase (Burkholderia pseudomallei (strain 1710b)).